Reading from the N-terminus, the 690-residue chain is Putative glycerophosphocholine phosphodiesterase GPCPD1 homolog 1 (690 aa).

The CBM20 domain occupies 1-122; the sequence is MDQDYKAHFK…RKNITDQFGS (122 aa). The region spanning 344 to 654 is the GP-PDE domain; the sequence is MLQIGHRGMG…DRIGEDEVLK (311 aa). Positions 670–690 are disordered; sequence ARSQHNSRSPSMSRRCMSTVE. Low complexity predominate over residues 676-690; sequence SRSPSMSRRCMSTVE.

The protein belongs to the glycerophosphoryl diester phosphodiesterase family.

The sequence is that of Putative glycerophosphocholine phosphodiesterase GPCPD1 homolog 1 from Caenorhabditis elegans.